A 100-amino-acid chain; its full sequence is NADH-quinone oxidoreductase subunit K (100 aa).

Transmembrane regions (helical) follow at residues 2-22 (IGLTHYLILASLVFVIGLVGI), 29-49 (IMLFFSSEILLNSANIALAAI), and 60-80 (IIAFFIVAIAASEVAVGLGLL).

Belongs to the complex I subunit 4L family. As to quaternary structure, NDH-1 is composed of 14 different subunits. Subunits NuoA, H, J, K, L, M, N constitute the membrane sector of the complex.

Its subcellular location is the cell inner membrane. It carries out the reaction a quinone + NADH + 5 H(+)(in) = a quinol + NAD(+) + 4 H(+)(out). Its function is as follows. NDH-1 shuttles electrons from NADH, via FMN and iron-sulfur (Fe-S) centers, to quinones in the respiratory chain. The immediate electron acceptor for the enzyme in this species is believed to be ubiquinone. Couples the redox reaction to proton translocation (for every two electrons transferred, four hydrogen ions are translocated across the cytoplasmic membrane), and thus conserves the redox energy in a proton gradient. The protein is NADH-quinone oxidoreductase subunit K of Campylobacter concisus (strain 13826).